Consider the following 255-residue polypeptide: 5'-nucleotidase SurE (255 aa).

Asp16, Asp17, Ser47, and Asn100 together coordinate a divalent metal cation.

This sequence belongs to the SurE nucleotidase family. The cofactor is a divalent metal cation.

The protein resides in the cytoplasm. It catalyses the reaction a ribonucleoside 5'-phosphate + H2O = a ribonucleoside + phosphate. In terms of biological role, nucleotidase that shows phosphatase activity on nucleoside 5'-monophosphates. This is 5'-nucleotidase SurE from Vibrio vulnificus (strain YJ016).